A 137-amino-acid chain; its full sequence is Small ribosomal subunit protein uS11 (137 aa).

Residues methionine 1–lysine 11 are compositionally biased toward polar residues. Disordered stretches follow at residues methionine 1–alanine 28 and threonine 117–valine 137. The segment covering lysine 12 to lysine 21 has biased composition (basic residues).

This sequence belongs to the universal ribosomal protein uS11 family. Part of the 30S ribosomal subunit. Interacts with proteins S7 and S18. Binds to IF-3.

Located on the platform of the 30S subunit, it bridges several disparate RNA helices of the 16S rRNA. Forms part of the Shine-Dalgarno cleft in the 70S ribosome. The sequence is that of Small ribosomal subunit protein uS11 from Rhodococcus opacus (strain B4).